Consider the following 101-residue polypeptide: Small ribosomal subunit protein uS14 (101 aa).

Belongs to the universal ribosomal protein uS14 family. As to quaternary structure, part of the 30S ribosomal subunit. Contacts proteins S3 and S10.

In terms of biological role, binds 16S rRNA, required for the assembly of 30S particles and may also be responsible for determining the conformation of the 16S rRNA at the A site. The protein is Small ribosomal subunit protein uS14 of Saccharophagus degradans (strain 2-40 / ATCC 43961 / DSM 17024).